The sequence spans 571 residues: Urease subunit alpha (571 aa).

Residues 132–571 (GGIDSHIHFI…LPMAQRYFLF (440 aa)) form the Urease domain. The Ni(2+) site is built by His137, His139, and Lys220. Residue Lys220 is modified to N6-carboxylysine. His222 contributes to the substrate binding site. Ni(2+) is bound by residues His249 and His275. The active-site Proton donor is His323. Residue Asp363 coordinates Ni(2+).

It belongs to the metallo-dependent hydrolases superfamily. Urease alpha subunit family. In terms of assembly, heterotrimer of UreA (gamma), UreB (beta) and UreC (alpha) subunits. Three heterotrimers associate to form the active enzyme. Requires Ni cation as cofactor. Carboxylation allows a single lysine to coordinate two nickel ions.

It is found in the cytoplasm. The catalysed reaction is urea + 2 H2O + H(+) = hydrogencarbonate + 2 NH4(+). It functions in the pathway nitrogen metabolism; urea degradation; CO(2) and NH(3) from urea (urease route): step 1/1. The chain is Urease subunit alpha from Kocuria rhizophila (strain ATCC 9341 / DSM 348 / NBRC 103217 / DC2201).